Reading from the N-terminus, the 917-residue chain is Isoleucine--tRNA ligase (917 aa).

The short motif at 59–69 (PYANGHIHIGH) is the 'HIGH' region element. E569 provides a ligand contact to L-isoleucyl-5'-AMP. Positions 610-614 (KMSKS) match the 'KMSKS' region motif. An ATP-binding site is contributed by K613. Zn(2+) is bound by residues C890, C893, C905, and C908.

The protein belongs to the class-I aminoacyl-tRNA synthetase family. IleS type 1 subfamily. In terms of assembly, monomer. Requires Zn(2+) as cofactor.

It localises to the cytoplasm. It carries out the reaction tRNA(Ile) + L-isoleucine + ATP = L-isoleucyl-tRNA(Ile) + AMP + diphosphate. Functionally, catalyzes the attachment of isoleucine to tRNA(Ile). As IleRS can inadvertently accommodate and process structurally similar amino acids such as valine, to avoid such errors it has two additional distinct tRNA(Ile)-dependent editing activities. One activity is designated as 'pretransfer' editing and involves the hydrolysis of activated Val-AMP. The other activity is designated 'posttransfer' editing and involves deacylation of mischarged Val-tRNA(Ile). This is Isoleucine--tRNA ligase from Campylobacter jejuni subsp. jejuni serotype O:2 (strain ATCC 700819 / NCTC 11168).